Here is a 210-residue protein sequence, read N- to C-terminus: Uridine kinase P10 (210 aa).

10-18 serves as a coordination point for ATP; that stretch reads GISGSGKST. Aspartate 41 is an active-site residue.

This sequence belongs to the uridine kinase family. As to quaternary structure, interacts with host eIF-2B; this interaction disrupts the interaction between eIF2 and eIF-2B, which leads to the inhibition of stress granules formation.

It localises to the host cytoplasm. Its subcellular location is the host perinuclear region. The enzyme catalyses uridine + ATP = UMP + ADP + H(+). In terms of biological role, inhibits the integrated stress response (ISR) in the infected cell by preventing the sequestration of eIF2B by phosphorylated EIF2S1/eIF-2alpha. Stress granule formation in response to EIF2S1/eIF-2alpha phosphorylation is thus inhibited, which allows protein synthesis and viral replication. Phosphorylates uridine to uridine monophosphate. The protein is Uridine kinase P10 (ORF10) of Beluga whale coronavirus (strain SW1) (BwCoV).